The primary structure comprises 348 residues: Lipoyl synthase, mitochondrial (348 aa).

[4Fe-4S] cluster-binding residues include Cys105, Cys110, Cys116, Cys136, Cys140, and Cys143. A Radical SAM core domain is found at 121–341 (ETGTATATIM…RTXXLVSYVL (221 aa)).

Belongs to the radical SAM superfamily. Lipoyl synthase family. Requires [4Fe-4S] cluster as cofactor.

Its subcellular location is the mitochondrion. It carries out the reaction [[Fe-S] cluster scaffold protein carrying a second [4Fe-4S](2+) cluster] + N(6)-octanoyl-L-lysyl-[protein] + 2 oxidized [2Fe-2S]-[ferredoxin] + 2 S-adenosyl-L-methionine + 4 H(+) = [[Fe-S] cluster scaffold protein] + N(6)-[(R)-dihydrolipoyl]-L-lysyl-[protein] + 4 Fe(3+) + 2 hydrogen sulfide + 2 5'-deoxyadenosine + 2 L-methionine + 2 reduced [2Fe-2S]-[ferredoxin]. It participates in protein modification; protein lipoylation via endogenous pathway; protein N(6)-(lipoyl)lysine from octanoyl-[acyl-carrier-protein]: step 2/2. Functionally, catalyzes the radical-mediated insertion of two sulfur atoms into the C-6 and C-8 positions of the octanoyl moiety bound to the lipoyl domains of lipoate-dependent enzymes, thereby converting the octanoylated domains into lipoylated derivatives. This is Lipoyl synthase, mitochondrial (LIP1) from Ricinus communis (Castor bean).